The sequence spans 412 residues: MKIAVETTLFDFFVIDQFKKSTFSAPNTKVDTIKGCINKFIEQFNVYDEQHIFWQPPGKSNVRLLSNANDFGQLGNFLHKKIKCNIFIGEEALRKYDLNICGPYDKFVENSDPSVKKVVNRDDVMLSRKCLNIISEQLSILEKSISKAQNQVLQSSEVEGKKCIILPEDKPELIKFFSKFETSVQLQEVYEGYKVYEKLLQKFGGQKKRMESFLNENTPMSGAEAIKQINISEELKEKGERLTTPNDPLLHVEVSNEDNSLHFILYNKTNIIIPGNCTFEFSSQISEVFSIKMGPHEIGIKGQKELWFFPSLPTPLSNYTMKVVNQDGETILVGKCADSNEITLKSPLASFSTGSFQTGSFHTLQDPTNVFRADALSSPDESSIMSTPFLGETDEVYNSGSTLSRPFTWEEI.

The segment at 246 to 348 (NDPLLHVEVS…SNEITLKSPL (103 aa)) is AMS1-binding.

In terms of assembly, interacts with AMS1, ATG8 and ATG11.

The protein resides in the preautophagosomal structure membrane. Its function is as follows. Cargo-receptor protein involved in the cytoplasm to vacuole transport (Cvt) and in autophagy. Recognizes cargo proteins, such as AMS1 and delivers them to the pre-autophagosomal structure for eventual engulfment by the autophagosome and targeting to the vacuole. The chain is Autophagy-related protein 34 (ATG34) from Saccharomyces cerevisiae (strain ATCC 204508 / S288c) (Baker's yeast).